The following is a 712-amino-acid chain: Polyribonucleotide nucleotidyltransferase (712 aa).

Mg(2+) contacts are provided by Asp487 and Asp493. A KH domain is found at 554–613; sequence PRIEVMNIPVDKIREVIGSGGKVIREIVEKTGAKINIEDDGTVKIASSSGKEIEAARKWI. Positions 623-691 constitute an S1 motif domain; that stretch reads GQIYEGTVVK…ERGKVRLSMK (69 aa).

Belongs to the polyribonucleotide nucleotidyltransferase family. Mg(2+) serves as cofactor.

The protein localises to the cytoplasm. It catalyses the reaction RNA(n+1) + phosphate = RNA(n) + a ribonucleoside 5'-diphosphate. Its function is as follows. Involved in mRNA degradation. Catalyzes the phosphorolysis of single-stranded polyribonucleotides processively in the 3'- to 5'-direction. This is Polyribonucleotide nucleotidyltransferase from Rhizobium etli (strain ATCC 51251 / DSM 11541 / JCM 21823 / NBRC 15573 / CFN 42).